The chain runs to 511 residues: cAMP-regulated M3L protein (511 aa).

This sequence to D.discoideum protein M3R.

The polypeptide is cAMP-regulated M3L protein (prtA) (Dictyostelium discoideum (Social amoeba)).